The chain runs to 232 residues: Large ribosomal subunit protein uL1 (232 aa).

The protein belongs to the universal ribosomal protein uL1 family. Part of the 50S ribosomal subunit.

Its function is as follows. Binds directly to 23S rRNA. The L1 stalk is quite mobile in the ribosome, and is involved in E site tRNA release. In terms of biological role, protein L1 is also a translational repressor protein, it controls the translation of the L11 operon by binding to its mRNA. The polypeptide is Large ribosomal subunit protein uL1 (Alkaliphilus metalliredigens (strain QYMF)).